A 511-amino-acid chain; its full sequence is Cytochrome P450 26B1 (511 aa).

C440 serves as a coordination point for heme.

This sequence belongs to the cytochrome P450 family. It depends on heme as a cofactor.

The protein resides in the endoplasmic reticulum membrane. Its subcellular location is the microsome membrane. It catalyses the reaction all-trans-retinoate + reduced [NADPH--hemoprotein reductase] + O2 = all-trans-4-hydroxyretinoate + oxidized [NADPH--hemoprotein reductase] + H2O + H(+). The catalysed reaction is all-trans-retinoate + reduced [NADPH--hemoprotein reductase] + O2 = all-trans-18-hydroxyretinoate + oxidized [NADPH--hemoprotein reductase] + H2O + H(+). Functionally, a cytochrome P450 monooxygenase involved in the metabolism of retinoates (RAs), the active metabolites of vitamin A, and critical signaling molecules in animals. RAs exist as at least four different isomers: all-trans-RA (atRA), 9-cis-RA, 13-cis-RA, and 9,13-dicis-RA, where atRA is considered to be the biologically active isomer, although 9-cis-RA and 13-cis-RA also have activity. Catalyzes the hydroxylation of atRA primarily at C-4 and C-18, thereby contributing to the regulation of atRA homeostasis and signaling. Hydroxylation of atRA limits its biological activity and initiates a degradative process leading to its eventual elimination. Involved in the convertion of atRA to all-trans-4-oxo-RA. Can oxidize all-trans-13,14-dihydroretinoate (DRA) to metabolites which could include all-trans-4-oxo-DRA, all-trans-4-hydroxy-DRA, all-trans-5,8-epoxy-DRA, and all-trans-18-hydroxy-DRA. The polypeptide is Cytochrome P450 26B1 (cyp26b1) (Xenopus tropicalis (Western clawed frog)).